Reading from the N-terminus, the 235-residue chain is Probable deoxycytidine kinase FPV151 (235 aa).

30–38 provides a ligand contact to ATP; sequence GNISAGKST. Residues Glu-53, Tyr-68, and Gln-79 each coordinate substrate. Glu-104 (proton acceptor) is an active-site residue. Substrate contacts are provided by Arg-105, Asp-110, and Glu-172.

The protein belongs to the DCK/DGK family.

It catalyses the reaction 2'-deoxycytidine + a ribonucleoside 5'-triphosphate = dCMP + a ribonucleoside 5'-diphosphate + H(+). The chain is Probable deoxycytidine kinase FPV151 from Vertebrata (FPV).